The primary structure comprises 717 residues: Transport/processing ATP-binding protein ComA (717 aa).

Positions 11-138 (QVDQMDCGVA…EEWTGVTLFM (128 aa)) constitute a Peptidase C39 domain. Residue Cys17 is part of the active site. The next 7 helical transmembrane spans lie at 18–38 (GVASLAMVFGYYGSYYFLAHL), 166–186 (GLIANIVLATLLVTVINIVGS), 205–225 (LGIISIGLVIVYILQQILSYA), 237–257 (LSIDVILSYIKHVFHLPMSFF), 281–301 (STILSIFLDVSTVVIISLVLF), 306–326 (NLFFMTLLALPIYTVIIFAFM), and 397–417 (VAHLLLNVGILWMGAVLVMDG). One can recognise an ABC transmembrane type-1 domain in the interval 168 to 450 (IANIVLATLL…IINLQTKLQT (283 aa)). An ABC transporter domain is found at 484 to 717 (MTFKQVHYKY…GGFYAHLVNS (234 aa)). 517-524 (GISGSGKT) is an ATP binding site.

This sequence belongs to the ABC transporter superfamily. HlyB family.

Its subcellular location is the cell membrane. Its function is as follows. Required for induction of competence. Seems to transport the competence-stimulating peptide (CSP). The protein is Transport/processing ATP-binding protein ComA (comA) of Streptococcus pneumoniae (strain ATCC BAA-255 / R6).